The sequence spans 112 residues: DNA-binding protein PF1087 (112 aa).

This sequence belongs to the PDCD5 family.

This chain is DNA-binding protein PF1087, found in Pyrococcus furiosus (strain ATCC 43587 / DSM 3638 / JCM 8422 / Vc1).